The primary structure comprises 1034 residues: Phosphoenolpyruvate carboxylase (1034 aa).

Active-site residues include His203 and Lys680.

The protein belongs to the PEPCase type 1 family. The cofactor is Mg(2+).

The catalysed reaction is oxaloacetate + phosphate = phosphoenolpyruvate + hydrogencarbonate. Functionally, forms oxaloacetate, a four-carbon dicarboxylic acid source for the tricarboxylic acid cycle. This Synechocystis sp. (strain ATCC 27184 / PCC 6803 / Kazusa) protein is Phosphoenolpyruvate carboxylase (ppc).